We begin with the raw amino-acid sequence, 369 residues long: Anhydro-N-acetylmuramic acid kinase (369 aa).

12 to 19 (GTSLDGVD) contacts ATP.

The protein belongs to the anhydro-N-acetylmuramic acid kinase family.

The catalysed reaction is 1,6-anhydro-N-acetyl-beta-muramate + ATP + H2O = N-acetyl-D-muramate 6-phosphate + ADP + H(+). It participates in amino-sugar metabolism; 1,6-anhydro-N-acetylmuramate degradation. It functions in the pathway cell wall biogenesis; peptidoglycan recycling. Functionally, catalyzes the specific phosphorylation of 1,6-anhydro-N-acetylmuramic acid (anhMurNAc) with the simultaneous cleavage of the 1,6-anhydro ring, generating MurNAc-6-P. Is required for the utilization of anhMurNAc either imported from the medium or derived from its own cell wall murein, and thus plays a role in cell wall recycling. This Actinobacillus pleuropneumoniae serotype 3 (strain JL03) protein is Anhydro-N-acetylmuramic acid kinase.